A 269-amino-acid polypeptide reads, in one-letter code: Protein tio (269 aa).

Residues Met1–Lys12 are compositionally biased toward basic and acidic residues. The tract at residues Met1–Asn127 is disordered. Residues Met1 to Cys246 lie on the Cytoplasmic side of the membrane. Over residues Pro27–Pro41 the composition is skewed to pro residues. Low complexity predominate over residues Ser61 to Pro74. Polar residues-rich tracts occupy residues Ser91–Asn101 and Ala114–Asn127. Residue Tyr136 is modified to Phosphotyrosine; by host LCK. The CSKH/LBD2 stretch occupies residues Glu158–Tyr167. The segment at Ile186–Pro195 is SH3B/LBD1. A helical transmembrane segment spans residues Leu247–Leu267. Residues Met268 to Lys269 are Extracellular-facing.

As to quaternary structure, homodimer. Binds SH3 domain of host LYN, HCK, LCK, SRC, FYN or YES. When tyrosine-phosphorylated, binds to the SH2 domain of host LCK, SRC, or FYN. Post-translationally, phosphorylated by host LCK, SRC and less efficiently by FYN.

It is found in the host cell membrane. Transforms host T-cells, inducing T-cell lymphomia in the host. Activates at least SRC and LCK tyrosines kinases, thereby activating signaling pathway transforming host T-cells. Human T-cells transformed ex vivo display a IL2 indenpendent growth phenotype. The chain is Protein tio from Ateles (AtHV-3).